Consider the following 197-residue polypeptide: Phosphoheptose isomerase (197 aa).

Residues 36–197 enclose the SIS domain; that stretch reads MVNALLNEGK…IDRQLFGSEE (162 aa). Position 51 to 53 (51 to 53) interacts with substrate; that stretch reads NGG. Residues His60 and Glu64 each coordinate Zn(2+). Residues Glu64, 93–94, 119–121, Ser124, and Gln174 each bind substrate; these read ND and STS. Gln174 and His182 together coordinate Zn(2+).

This sequence belongs to the SIS family. GmhA subfamily. In terms of assembly, homotetramer. Zn(2+) serves as cofactor.

It localises to the cytoplasm. The catalysed reaction is 2 D-sedoheptulose 7-phosphate = D-glycero-alpha-D-manno-heptose 7-phosphate + D-glycero-beta-D-manno-heptose 7-phosphate. The protein operates within carbohydrate biosynthesis; D-glycero-D-manno-heptose 7-phosphate biosynthesis; D-glycero-alpha-D-manno-heptose 7-phosphate and D-glycero-beta-D-manno-heptose 7-phosphate from sedoheptulose 7-phosphate: step 1/1. Catalyzes the isomerization of sedoheptulose 7-phosphate in D-glycero-D-manno-heptose 7-phosphate. This chain is Phosphoheptose isomerase, found in Pseudomonas aeruginosa (strain LESB58).